Reading from the N-terminus, the 118-residue chain is Large ribosomal subunit protein bL20 (118 aa).

The protein belongs to the bacterial ribosomal protein bL20 family.

In terms of biological role, binds directly to 23S ribosomal RNA and is necessary for the in vitro assembly process of the 50S ribosomal subunit. It is not involved in the protein synthesizing functions of that subunit. The chain is Large ribosomal subunit protein bL20 from Clostridioides difficile (strain 630) (Peptoclostridium difficile).